An 802-amino-acid polypeptide reads, in one-letter code: Ras GTPase-activating protein 4 (802 aa).

C2 domains lie at 1 to 105 (MAKR…SGWT) and 116 to 232 (VQGE…EGWF). Ca(2+)-binding residues include Asp21, Asp27, Asp74, Asp76, Ser79, Asp82, Asp149, Asp155, Asp202, Asp204, Ser207, and Asp210. The Ras-GAP domain maps to 317-545 (GLAKDFLDLL…AQLKDFIMKL (229 aa)). Residues 565–672 (PPVKEGPLFI…WLSALRKAST (108 aa)) enclose the PH domain. A Btk-type zinc finger spans residues 674–710 (NRGLLRSYHPGIFRGDKWSCCHQKDKTDQGCDKTHSR). 4 residues coordinate Zn(2+): His682, Cys693, Cys694, and Cys704.

It depends on Ca(2+) as a cofactor. As to expression, isoform 2 is expressed in osteoblasts.

It is found in the cytoplasm. The protein resides in the cytosol. It localises to the cell membrane. Its function is as follows. Ca(2+)-dependent Ras GTPase-activating protein, that switches off the Ras-MAPK pathway following a stimulus that elevates intracellular calcium. Functions as an adaptor for Cdc42 and Rac1 during FcR-mediated phagocytosis. Isoform 2 activates the Ras pathway and promotes RANKL shedding by modulating the expression of MMP14. The polypeptide is Ras GTPase-activating protein 4 (Rasa4) (Mus musculus (Mouse)).